A 327-amino-acid polypeptide reads, in one-letter code: Malate dehydrogenase (327 aa).

11 to 17 (GAAGQIA) serves as a coordination point for NAD(+). Substrate is bound by residues Arg92 and Arg98. NAD(+) is bound by residues Asn105, Gln112, and 129 to 131 (VGN). Substrate contacts are provided by Asn131 and Arg162. His187 acts as the Proton acceptor in catalysis.

Belongs to the LDH/MDH superfamily. MDH type 2 family.

It carries out the reaction (S)-malate + NAD(+) = oxaloacetate + NADH + H(+). Its function is as follows. Catalyzes the reversible oxidation of malate to oxaloacetate. This is Malate dehydrogenase from Nitrosospira multiformis (strain ATCC 25196 / NCIMB 11849 / C 71).